The following is a 252-amino-acid chain: 5'-nucleotidase SurE (252 aa).

A divalent metal cation-binding residues include Asp-8, Asp-9, Ser-39, and Asn-91.

Belongs to the SurE nucleotidase family. Requires a divalent metal cation as cofactor.

It is found in the cytoplasm. It catalyses the reaction a ribonucleoside 5'-phosphate + H2O = a ribonucleoside + phosphate. Nucleotidase that shows phosphatase activity on nucleoside 5'-monophosphates. The polypeptide is 5'-nucleotidase SurE (Legionella pneumophila (strain Lens)).